We begin with the raw amino-acid sequence, 381 residues long: Tumor necrosis factor receptor superfamily member 10B (381 aa).

Positions 1-52 are cleaved as a signal peptide; that stretch reads MEPPGPSTPTASAAARADHYTPGLRPLPKRRLLYSFALLLAVLQAVFVPVTA. TNFR-Cys repeat units follow at residues 26–86, 87–129, and 130–169; these read PLPK…GNCK, PCRE…NTVC, and RCKP…NRKC. The Extracellular segment spans residues 53-180; that stretch reads NPAHNRPAGL…SKTAWASWHK (128 aa). 7 disulfides stabilise this stretch: C74–C85, C88–C105, C108–C121, C111–C129, C131–C145, C148–C161, and C151–C169. Residues 181 to 201 form a helical membrane-spanning segment; the sequence is LGLWIGLLVPVVLLIGALLVW. The Cytoplasmic segment spans residues 202-381; it reads KTGAWRQWLL…ETGPGGSQCV (180 aa). Residues 228 to 260 are disordered; that stretch reads HSSLLDRQTSSTTNDSNHNTEPGKTQKTGKKLL. Residues 236 to 247 show a composition bias toward low complexity; that stretch reads TSSTTNDSNHNT. Residues 273–356 form the Death domain; that stretch reads KFIFEYCSDI…DAMEKIEDYA (84 aa). (Microbial infection) N-beta-linked (GlcNAc) arginine glycosylation occurs at R293.

In terms of assembly, monomer. Can interact with TRADD and RIPK1. Three TNFRSF10B molecules interact with the TNFSF10 homotrimer. In the absence of stimulation, interacts with BIRC2, DDX3X and GSK3B. The interaction with BIRC2 and DDX3X is further enhanced upon receptor stimulation and accompanied by DDX3X and BIRC2 cleavage. In terms of processing, (Microbial infection) Glycosylated at Arg-293 by S.typhimurium protein Ssek3. As to expression, highly expressed in heart, lung and kidney.

It localises to the membrane. Functionally, receptor for the cytotoxic ligand TNFSF10/TRAIL. The adapter molecule FADD recruits caspase-8 to the activated receptor. The resulting death-inducing signaling complex (DISC) performs caspase-8 proteolytic activation which initiates the subsequent cascade of caspases (aspartate-specific cysteine proteases) mediating apoptosis. Promotes the activation of NF-kappa-B. Essential for ER stress-induced apoptosis. This chain is Tumor necrosis factor receptor superfamily member 10B (Tnfrsf10b), found in Mus musculus (Mouse).